Reading from the N-terminus, the 102-residue chain is Protamine-2 (102 aa).

Residues serine 8, serine 10, and serine 37 each carry the phosphoserine modification. Disordered stretches follow at residues 15–41 (EVYG…PEQV) and 66–102 (IHRQ…CRRH).

The protein belongs to the protamine P2 family. As to quaternary structure, interacts with TDRP. Proteolytic processing into mature chains is required for histone eviction during spermatogenesis. Transition proteins (TNP1 and TNP2) are required for processing. Testis.

The protein localises to the nucleus. The protein resides in the chromosome. Its function is as follows. Protamines substitute for histones in the chromatin of sperm during the haploid phase of spermatogenesis. They compact sperm DNA into a highly condensed, stable and inactive complex. The protein is Protamine-2 (PRM2) of Pongo pygmaeus (Bornean orangutan).